A 140-amino-acid polypeptide reads, in one-letter code: Sex-regulated protein janus-B (140 aa).

A substrate-binding site is contributed by Arg42. The active-site Proton acceptor is His69. 110 to 112 (SRT) lines the substrate pocket.

This sequence belongs to the janus family.

In terms of biological role, janA and janB regulate somatic sex differentiation. This is Sex-regulated protein janus-B (janB) from Drosophila simulans (Fruit fly).